The chain runs to 190 residues: NADH-ubiquinone oxidoreductase 75 kDa subunit, mitochondrial (190 aa).

This sequence belongs to the complex I 75 kDa subunit family. As to quaternary structure, core subunit of respiratory chain NADH dehydrogenase (Complex I) which is composed of 45 different subunits. This is the largest subunit of complex I and it is a component of the iron-sulfur (IP) fragment of the enzyme. Complex I associates with ubiquinol-cytochrome reductase complex (Complex III) to form supercomplexes. Interacts with MDM2 and AKAP1. [2Fe-2S] cluster serves as cofactor. The cofactor is [4Fe-4S] cluster.

Its subcellular location is the mitochondrion inner membrane. It catalyses the reaction a ubiquinone + NADH + 5 H(+)(in) = a ubiquinol + NAD(+) + 4 H(+)(out). In terms of biological role, core subunit of the mitochondrial membrane respiratory chain NADH dehydrogenase (Complex I) which catalyzes electron transfer from NADH through the respiratory chain, using ubiquinone as an electron acceptor. Essential for catalysing the entry and efficient transfer of electrons within complex I. Plays a key role in the assembly and stability of complex I and participates in the association of complex I with ubiquinol-cytochrome reductase complex (Complex III) to form supercomplexes. The polypeptide is NADH-ubiquinone oxidoreductase 75 kDa subunit, mitochondrial (Mesocricetus auratus (Golden hamster)).